The chain runs to 242 residues: Small ribosomal subunit protein uS2 (242 aa).

The protein belongs to the universal ribosomal protein uS2 family.

The chain is Small ribosomal subunit protein uS2 from Tolumonas auensis (strain DSM 9187 / NBRC 110442 / TA 4).